A 109-amino-acid polypeptide reads, in one-letter code: Large ribosomal subunit protein uL24 (109 aa).

The protein belongs to the universal ribosomal protein uL24 family. As to quaternary structure, part of the 50S ribosomal subunit.

Functionally, one of two assembly initiator proteins, it binds directly to the 5'-end of the 23S rRNA, where it nucleates assembly of the 50S subunit. In terms of biological role, one of the proteins that surrounds the polypeptide exit tunnel on the outside of the subunit. This is Large ribosomal subunit protein uL24 from Hamiltonella defensa subsp. Acyrthosiphon pisum (strain 5AT).